The sequence spans 161 residues: Ubiquitin D (161 aa).

2 consecutive Ubiquitin-like domains span residues 3–77 (SCVC…LKVV) and 86–159 (LSLV…AHCI).

This sequence belongs to the ubiquitin D family. Interacts directly with the 26S proteasome. Interacts with NUB1; this interaction facilitates the linking of UBD-conjugated target protein to the proteasome complex and accelerates its own degradation and that of its conjugates. Interacts (via ubiquitin-like 1 domain) with the spindle checkpoint protein MAD2L1 during mitosis. Present in aggresomes of proteasome inhibited cells. Interacts with HDAC6 under proteasome impairment conditions. Forms a thioester with UBA6 in cells stimulated with tumor necrosis factor-alpha (TNFa) and interferon-gamma (IFNg). Interacts with SQSTM1 and TP53/p53. Post-translationally, can be acetylated.

The protein resides in the nucleus. It localises to the cytoplasm. Functionally, ubiquitin-like protein modifier which can be covalently attached to target proteins and subsequently leads to their degradation by the 26S proteasome, in a NUB1-dependent manner. Conjugation to the target protein is activated by UBA6 via adenylation of its C-terminal glycine. Probably functions as a survival factor. Promotes the expression of the proteasome subunit beta type-9 (PSMB9/LMP2). Regulates TNF-alpha-induced and LPS-mediated activation of the central mediator of innate immunity NF-kappa-B by promoting TNF-alpha-mediated proteasomal degradation of ubiquitinated-I-kappa-B-alpha. Required for TNF-alpha-induced p65 nuclear translocation in renal tubular epithelial cells (RTECs). May be involved in dendritic cell (DC) maturation, the process by which immature dendritic cells differentiate into fully competent antigen-presenting cells that initiate T-cell responses. Mediates mitotic non-disjunction and chromosome instability, in long-term in vitro culture and cancers, by abbreviating mitotic phase and impairing the kinetochore localization of MAD2L1 during the prometaphase stage of the cell cycle. May be involved in the formation of aggresomes when proteasome is saturated or impaired. Mediates apoptosis in a caspase-dependent manner, especially in renal epithelium and tubular cells during renal diseases. In Rattus norvegicus (Rat), this protein is Ubiquitin D (Ubd).